We begin with the raw amino-acid sequence, 814 residues long: Lon protease (814 aa).

Residues 1-20 form a disordered region; it reads MANEAHNIEHTDPEFRDDSA. One can recognise a Lon N-terminal domain in the interval 25-219; the sequence is LPLLPVRDTV…KINQHLAKEL (195 aa). 372-379 lines the ATP pocket; the sequence is GPPGVGKT. Residues 610-792 enclose the Lon proteolytic domain; sequence TKRAGVVVGL…DEVLEIALPS (183 aa). Residues Ser-697 and Lys-740 contribute to the active site.

Belongs to the peptidase S16 family. Homohexamer. Organized in a ring with a central cavity.

It is found in the cytoplasm. The enzyme catalyses Hydrolysis of proteins in presence of ATP.. Functionally, ATP-dependent serine protease that mediates the selective degradation of mutant and abnormal proteins as well as certain short-lived regulatory proteins. Required for cellular homeostasis and for survival from DNA damage and developmental changes induced by stress. Degrades polypeptides processively to yield small peptide fragments that are 5 to 10 amino acids long. Binds to DNA in a double-stranded, site-specific manner. In Koribacter versatilis (strain Ellin345), this protein is Lon protease.